The chain runs to 214 residues: MKIFFFLALLALVVSATFAQYAESDGSYEEVEGSHDRCQQHQMKLDSCREYVAERCTTMRDFPITWPWKWWKGGCEELRNECCQLLGQMPSECRCDAIWRSIQRELGGFFGTQQGLIGKRLKIAKSLPTQSTWALSAISPNSMVSHIAGKSSILRALPVDVLANAYRISRQEARNLKNNRGQESGVFTPKFTQTSFQPYPEGEDESSLINKASE.

Positions 1-28 are cleaved as a signal peptide; that stretch reads MKIFFFLALLALVVSATFAQYAESDGSY. The disordered stretch occupies residues 180–214; that stretch reads RGQESGVFTPKFTQTSFQPYPEGEDESSLINKASE.

Functionally, seed storage protein. In Avena sativa (Oat), this protein is Avenin.